Reading from the N-terminus, the 938-residue chain is Protein SEY1 (938 aa).

The interval 1-159 (MTSQSHGAPP…QKSAKSTPGS (159 aa)) is disordered. Over 1 to 839 (MTSQSHGAPP…KRSTIQSTTQ (839 aa)) the chain is Cytoplasmic. The segment covering 33-45 (SVSSSHSSHSPVT) has biased composition (low complexity). Over residues 74–94 (IAAPEPIAAPEPIPAPEPIAA) the composition is skewed to pro residues. Residues 100–118 (LKSEHKPVEREHKPVERKP) show a composition bias toward basic and acidic residues. Residues 146-158 (VPTSQKSAKSTPG) show a composition bias toward polar residues. The 232-residue stretch at 192-423 (GLDYHVVAVF…DPNYVFKPVY (232 aa)) folds into the GB1/RHD3-type G domain. 202–209 (GSQSTGKS) serves as a coordination point for GTP. Residues 603–630 (SYDDTLAALEQELDTLRDHKSKVEIDRL) adopt a coiled-coil conformation. The helical transmembrane segment at 840–860 (IPLYMYGLLLLLGWNEIMAVL) threads the bilayer. Residues 861–863 (RSP) lie on the Lumenal side of the membrane. Residues 864 to 884 (VYFMFLLVAAGAAYVIHTLHL) traverse the membrane as a helical segment. Topologically, residues 885 to 938 (WGPLTHMTNTMIAEATDMAKAKLKQVLNEAPTGETREREAPVGSSRDDVELKDL) are cytoplasmic. The tract at residues 911 to 938 (LNEAPTGETREREAPVGSSRDDVELKDL) is disordered. Residues 918-938 (ETREREAPVGSSRDDVELKDL) show a composition bias toward basic and acidic residues.

Belongs to the TRAFAC class dynamin-like GTPase superfamily. GB1/RHD3 GTPase family. RHD3 subfamily.

The protein resides in the endoplasmic reticulum membrane. Functionally, cooperates with the reticulon proteins and tubule-shaping DP1 family proteins to generate and maintain the structure of the tubular endoplasmic reticulum network. Has GTPase activity, which is required for its function in ER organization. This Yarrowia lipolytica (strain CLIB 122 / E 150) (Yeast) protein is Protein SEY1.